We begin with the raw amino-acid sequence, 155 residues long: Protein SprT-like (155 aa).

One can recognise a SprT-like domain in the interval 7–145 (QRHMEEVSLQ…GSCGGKLIQI (139 aa)). H67 provides a ligand contact to Zn(2+). E68 is a catalytic residue. Position 71 (H71) interacts with Zn(2+).

Belongs to the SprT family. Requires Zn(2+) as cofactor.

It is found in the cytoplasm. The polypeptide is Protein SprT-like (Listeria monocytogenes serotype 4a (strain HCC23)).